The following is a 104-amino-acid chain: Large ribosomal subunit protein bL21 (104 aa).

It belongs to the bacterial ribosomal protein bL21 family. In terms of assembly, part of the 50S ribosomal subunit. Contacts protein L20.

Its function is as follows. This protein binds to 23S rRNA in the presence of protein L20. The protein is Large ribosomal subunit protein bL21 of Symbiobacterium thermophilum (strain DSM 24528 / JCM 14929 / IAM 14863 / T).